The primary structure comprises 643 residues: Zinc finger protein 23 (643 aa).

The KRAB domain occupies 1–43 (MLENYGNVASLGFPLLKPAVISQLEGGSELGGSSPLAAGTGLQ). Residue K157 forms a Glycyl lysine isopeptide (Lys-Gly) (interchain with G-Cter in SUMO2) linkage. The C2H2-type 1; degenerate zinc-finger motif lies at 168–190 (FKCEELVEPFRCDSQLIQHQENN). 16 C2H2-type zinc fingers span residues 196-218 (YQCS…QRLH), 224-246 (FKCV…QTIH), 252-274 (YQCK…QRIH), 280-302 (YQCK…QRVH), 308-330 (YECN…QRIH), 336-358 (YECN…QSIH), 364-386 (YQCK…QRIH), 392-414 (YECT…QRIH), 420-442 (YECN…LRIH), 448-470 (YECN…QRIH), 476-498 (FECN…HRIH), 504-526 (YQCK…QRIH), 532-554 (FKCM…QRIH), 560-582 (FQCK…QRSH), 588-610 (FRCV…QTVH), and 616-638 (YMCS…QSVH).

It belongs to the krueppel C2H2-type zinc-finger protein family.

It localises to the nucleus. May be involved in transcriptional regulation. May have a role in embryonic development. This chain is Zinc finger protein 23 (ZNF23), found in Homo sapiens (Human).